The chain runs to 156 residues: Phosphopantetheine adenylyltransferase (156 aa).

Substrate is bound at residue Thr10. Residues 10–11 (TF) and His18 each bind ATP. Residues Lys42, Leu74, and Arg88 each coordinate substrate. ATP-binding positions include 89–91 (GIR), Glu99, and 124–130 (WAFISSS).

The protein belongs to the bacterial CoaD family. As to quaternary structure, homohexamer. It depends on Mg(2+) as a cofactor.

It localises to the cytoplasm. The catalysed reaction is (R)-4'-phosphopantetheine + ATP + H(+) = 3'-dephospho-CoA + diphosphate. It participates in cofactor biosynthesis; coenzyme A biosynthesis; CoA from (R)-pantothenate: step 4/5. In terms of biological role, reversibly transfers an adenylyl group from ATP to 4'-phosphopantetheine, yielding dephospho-CoA (dPCoA) and pyrophosphate. In Hamiltonella defensa subsp. Acyrthosiphon pisum (strain 5AT), this protein is Phosphopantetheine adenylyltransferase.